Reading from the N-terminus, the 448-residue chain is Metacaspase-1 (448 aa).

Positions 1–129 (MFPGQGRHTY…GHYSRPPTDS (129 aa)) are disordered. Residues 10–44 (YGGQQSNYSNQQQGYDQGYNQGYGQAYGQEYNQGY) are compositionally biased toward low complexity. A compositionally biased stretch (pro residues) spans 61 to 70 (SGPPPGPPPG). Residues 99–114 (YGNNQTRGSGNEQNYG) show a composition bias toward polar residues. Active-site residues include His231 and Cys292.

It belongs to the peptidase C14B family.

Functionally, involved in cell death (apoptosis). This chain is Metacaspase-1 (MCA1), found in Candida albicans (strain SC5314 / ATCC MYA-2876) (Yeast).